The following is a 370-amino-acid chain: Putative F-box protein At3g10430 (370 aa).

Residues 1-47 (MGSSLPFDLILEILQRTPAESLLRFKSTCKKWYELISNDKRFMYKHL) form the F-box domain.

The chain is Putative F-box protein At3g10430 from Arabidopsis thaliana (Mouse-ear cress).